The chain runs to 236 residues: UPF0257 lipoprotein YnfC (236 aa).

The signal sequence occupies residues 1 to 16 (MKKPLLLTLLCMILAG). The N-palmitoyl cysteine moiety is linked to residue Cys17. Cys17 carries the S-diacylglycerol cysteine lipid modification.

This sequence belongs to the UPF0257 family.

It is found in the cell membrane. This is UPF0257 lipoprotein YnfC from Salmonella dublin (strain CT_02021853).